Reading from the N-terminus, the 471-residue chain is Alpha-galactosidase (471 aa).

The first 18 residues, 1–18 (MFNLNFFNYTCHCEWCFW), serve as a signal peptide directing secretion. Cysteine 42 and cysteine 74 are disulfide-bonded. Asparagine 43 carries an N-linked (GlcNAc...) asparagine glycan. Residues aspartate 72 and aspartate 73 each contribute to the substrate site. Asparagine 105 carries N-linked (GlcNAc...) asparagine glycosylation. Cysteine 121 and cysteine 151 are disulfide-bonded. Lysine 147 is a binding site for substrate. Residue aspartate 149 is the Nucleophile of the active site. N-linked (GlcNAc...) asparagine glycosylation is present at asparagine 175. Position 205 (arginine 205) interacts with substrate. Aspartate 209 (proton donor) is an active-site residue. 2 disulfide bridges follow: cysteine 221-cysteine 237 and cysteine 223-cysteine 230. Glutamine 251 contacts substrate. Asparagine 270, asparagine 370, asparagine 403, asparagine 417, asparagine 422, and asparagine 454 each carry an N-linked (GlcNAc...) asparagine glycan.

It belongs to the glycosyl hydrolase 27 family. In terms of assembly, homotetramer.

It is found in the secreted. It catalyses the reaction Hydrolysis of terminal, non-reducing alpha-D-galactose residues in alpha-D-galactosides, including galactose oligosaccharides, galactomannans and galactolipids.. The sequence is that of Alpha-galactosidase (MEL) from Saccharomyces paradoxus (Yeast).